A 508-amino-acid polypeptide reads, in one-letter code: Lysine--tRNA ligase (508 aa).

The Mg(2+) site is built by glutamate 418 and glutamate 425.

Belongs to the class-II aminoacyl-tRNA synthetase family. As to quaternary structure, homodimer. Mg(2+) is required as a cofactor.

It localises to the cytoplasm. The catalysed reaction is tRNA(Lys) + L-lysine + ATP = L-lysyl-tRNA(Lys) + AMP + diphosphate. The protein is Lysine--tRNA ligase of Burkholderia mallei (strain NCTC 10247).